A 435-amino-acid polypeptide reads, in one-letter code: Mitochondrial association factor 1 form a1 (435 aa).

Residues 1 to 20 form the signal peptide; the sequence is MWRIWRCRLSFLFATGCLLG. Residues 21–95 are Vacuolar-facing; sequence ALTAGLGSQM…SVTARRRRNR (75 aa). The tract at residues 43-88 is disordered; the sequence is GVADASQEAGDVVEERTERTEEQVFAPGPPRRHSSESLFPRNASVT. A compositionally biased stretch (basic and acidic residues) spans 55 to 64; the sequence is VEERTERTEE. Residues 96–116 form a helical membrane-spanning segment; the sequence is RIAPIATAVGVAVILAALYVL. Over 117-435 the chain is Cytoplasmic; that stretch reads RRRRAQPPQE…ERKYKFPQGD (319 aa). Residues 120 to 162 form a disordered region; it reads RAQPPQEPEPPTRLRTPRPRAPSEQQQPSESEPPAEVPMTPDP. The segment covering 141-153 has biased composition (low complexity); the sequence is PSEQQQPSESEPP.

Interacts with host SAMM50.

It localises to the parasitophorous vacuole membrane. Its function is as follows. During host cell infection by tachyzoites, does not play a role in tethering the parasitophorous vacuole to the host mitochondria, probably because it does not bind host mitochondrial import protein TOMM70. This chain is Mitochondrial association factor 1 form a1, found in Toxoplasma gondii.